The following is a 249-amino-acid chain: Adenylate kinase (249 aa).

43–48 (GAGKGT) contributes to the ATP binding site. The segment at 63–92 (ATGDMLRAQVAAKTALGVEAKKIMDQGGLV) is NMP. Residues Thr-64, Arg-69, 90–92 (GLV), 119–122 (GFPR), and Gln-126 contribute to the AMP site. The LID stretch occupies residues 160-197 (GRLVHPASGRSYHKLFNPPKKDMTDDVTGEPLVQRSDD). ATP contacts are provided by residues Arg-161 and 170 to 171 (SY). The disordered stretch occupies residues 177-197 (PPKKDMTDDVTGEPLVQRSDD). Residues Arg-194 and Arg-205 each coordinate AMP. Gln-233 provides a ligand contact to ATP.

It belongs to the adenylate kinase family. AK2 subfamily. As to quaternary structure, monomer.

It is found in the cytoplasm. The protein localises to the cytosol. It localises to the mitochondrion intermembrane space. It catalyses the reaction AMP + ATP = 2 ADP. Its function is as follows. Catalyzes the reversible transfer of the terminal phosphate group between ATP and AMP. Plays an important role in cellular energy homeostasis and in adenine nucleotide metabolism. Adenylate kinase activity is critical for regulation of the phosphate utilization and the AMP de novo biosynthesis pathways. This is Adenylate kinase from Candida albicans (strain SC5314 / ATCC MYA-2876) (Yeast).